We begin with the raw amino-acid sequence, 135 residues long: Large ribosomal subunit protein uL16c (135 aa).

This sequence belongs to the universal ribosomal protein uL16 family. Part of the 50S ribosomal subunit.

It localises to the plastid. Its subcellular location is the chloroplast. The chain is Large ribosomal subunit protein uL16c from Acorus calamus var. americanus (American sweet flag).